The following is a 255-amino-acid chain: Sushi domain-containing protein 3 (255 aa).

Residues 1–25 are disordered; it reads MRWAAATLRGKARPRGRAGVTTPAP. Residues 1–103 lie on the Extracellular side of the membrane; that stretch reads MRWAAATLRG…VPPHETFGFK (103 aa). Asn-27 carries N-linked (GlcNAc...) asparagine glycosylation. In terms of domain architecture, Sushi spans 30–93; the sequence is GTCAKLRLPP…WSSGSPVCKL (64 aa). 2 disulfides stabilise this stretch: Cys-32–Cys-75 and Cys-61–Cys-91. The helical transmembrane segment at 104 to 124 threads the bilayer; that stretch reads VAVIASIVSCAIILLMSMAFL. The Cytoplasmic segment spans residues 125–255; it reads TCCLLKCVKK…PQQPAAYALG (131 aa). The tract at residues 173 to 255 is disordered; the sequence is SGPSQAHDNH…PQQPAAYALG (83 aa). Over residues 179-191 the composition is skewed to basic and acidic residues; the sequence is HDNHSFTTDHGES.

As to expression, highly expressed in estrogen receptor-positive breast tumors.

The protein localises to the cell membrane. May play a role in breast tumorigenesis by promoting estrogen-dependent cell proliferation, cell-cell interactions and migration. This is Sushi domain-containing protein 3 (SUSD3) from Homo sapiens (Human).